We begin with the raw amino-acid sequence, 366 residues long: Phosphate acyltransferase (366 aa).

The disordered stretch occupies residues 334–366 (ESAKNKETQSKQASTKNTAPKTSETTKESQQSL). Positions 343–366 (SKQASTKNTAPKTSETTKESQQSL) are enriched in polar residues.

It belongs to the PlsX family. As to quaternary structure, homodimer. Probably interacts with PlsY.

It is found in the cytoplasm. It catalyses the reaction a fatty acyl-[ACP] + phosphate = an acyl phosphate + holo-[ACP]. It functions in the pathway lipid metabolism; phospholipid metabolism. In terms of biological role, catalyzes the reversible formation of acyl-phosphate (acyl-PO(4)) from acyl-[acyl-carrier-protein] (acyl-ACP). This enzyme utilizes acyl-ACP as fatty acyl donor, but not acyl-CoA. This is Phosphate acyltransferase from Onion yellows phytoplasma (strain OY-M).